Here is a 518-residue protein sequence, read N- to C-terminus: Equilibrative nucleoside transporter 4 (518 aa).

Residues 1 to 10 (MGSKGAERRK) show a composition bias toward basic and acidic residues. Residues 1–21 (MGSKGAERRKQATPGQTPEGN) form a disordered region. Topologically, residues 1–66 (MGSKGAERRK…EEAVPDDRYH (66 aa)) are extracellular. A helical transmembrane segment spans residues 67–87 (GIYFAMLLAGVGFLLPYNSFI). Topologically, residues 88–99 (TDVDYLHHKFEG) are cytoplasmic. The helical transmembrane segment at 100–120 (TSIVFDMGLTYILVALVAVIL) threads the bilayer. Topologically, residues 121 to 133 (NNVLVEMLSLHTR) are extracellular. Residues 134 to 154 (ITVGYLFALGPLLFVTIFDVW) form a helical membrane-spanning segment. Over 155-157 (LER) the chain is Cytoplasmic. The helical transmembrane segment at 158–178 (FTIKQAYVINLMSMGTVAFGC) threads the bilayer. Residues 179 to 198 (TVQQSSFYGYMGMLPKRYTQ) lie on the Extracellular side of the membrane. Residues 199-218 (GVMTGESTAGVIISLSRIFT) form a helical membrane-spanning segment. The Cytoplasmic segment spans residues 219-229 (KLLIKDERKNT). The helical transmembrane segment at 230-250 (IIFFVISICMVLVCFILHLLV) threads the bilayer. The Extracellular segment spans residues 251-342 (RRTRFVQYYT…MILHRYVVAR (92 aa)). Residues 343–363 (VIWTYMLSIAVTYFITLCLFP) traverse the membrane as a helical segment. Over 364 to 376 (GLESEIKNATLGE) the chain is Cytoplasmic. Residues 377-397 (WLPILIMAIFNISDFVGKILA) traverse the membrane as a helical segment. The Extracellular segment spans residues 398-407 (AVPYEWNGTR). The helical transmembrane segment at 408-428 (LLFFSCVRVVFIPLFIMCVYP) threads the bilayer. Residues 429–439 (AQMPMFSHPAW) are Cytoplasmic-facing. The helical transmembrane segment at 440–460 (PCIFSLFMGITNGYFGSVPMI) threads the bilayer. The Extracellular segment spans residues 461–476 (HAAGKVAPEQRELAGN). A helical transmembrane segment spans residues 477 to 497 (IMTVSYMSGLMLGSVVAYAAY). Residues 498 to 518 (SFTASGSSFHSQTGYNFTQGY) lie on the Cytoplasmic side of the membrane.

This sequence belongs to the SLC29A/ENT transporter (TC 2.A.57) family.

It localises to the membrane. Functions as a polyspecific organic cation transporter, efficiently transporting many organic cations such as monoamine neurotransmitters 1-methyl-4-phenylpyridinium and biogenic amines including serotonin, dopamine, norepinephrine and epinephrine. May play a role in regulating central nervous system homeostasis of monoamine neurotransmitters. May be involved in luminal transport of organic cations in the kidney and seems to use luminal proton gradient to drive organic cation reabsorption. Does not seem to transport nucleoside and nucleoside analogs such as uridine, cytidine, thymidine, adenosine, inosine, guanosine, and azidothymidine. This Danio rerio (Zebrafish) protein is Equilibrative nucleoside transporter 4 (slc29a4).